A 141-amino-acid chain; its full sequence is uncharacterized protein (141 aa).

This is an uncharacterized protein from Acheta domesticus (House cricket).